We begin with the raw amino-acid sequence, 295 residues long: uncharacterized protein (295 aa).

The protein belongs to the ROK (NagC/XylR) family.

This is an uncharacterized protein from Clostridium perfringens (strain 13 / Type A).